The primary structure comprises 698 residues: MNEKKELQQELELQEFQTPKNQQLEKLQEPNGEISSTGNETSESGISSPPISQNDNSNNENESLNITPNKPFVSMQEELQNLDIENIPIPPTIQTPKIYKNTNNLIHSKNNLSLPISLSQENIVKLDKVDIESNDQVNSNTDNNNNTNNNNNTNNNKNEKIGLRSKIFKSKIFIKIRGWWWHRGISTYIMLFYIALNIGVGVHMFYNMYHSDIFKFLGLSFCFSRTAARLINLNSAVILLPVLRNFLSWLRGTIVNNYIPIDKHLNFHKLCAFMLFCCTIIHCVGHYISFKKINDDVLKIDDGKSVAGDYLNININNFPDEKYLFFKSVPGITGHIMLLILILIVSSSMWRIRRPMFEIFWYVHHLFIPFYILLCFHGYSKILKKDPQSWMWIIAPFILYSIERLIRIARSKKRVILEKAIMHPSKVLELRMKRDNDNFNFKPGQYLYLNCPSIAYHEWHPFTITSAPDDPFISVHINIVGNWTRKLFKLLNPDNKLGLIQEDLKSTQNRGKRRILKIDGPFGAPAENFFKYRNLVLIGAGIGVTPFSSILRHLKNQNDKQTNADENHLKINKIYFIWISRQKNSFQWFTDILAELENDERIDSILEIHIFLTGALELDDYAKIKNAQKCHITNLHSKTLFGRPNFRSIFNQLTQLHQREKIGVFYCGNKALGKNIIKNCNKFNGKNNCHLIFHKENF.

2 disordered regions span residues 1 to 68 and 134 to 158; these read MNEK…NITP and NDQV…NNKN. The Cytoplasmic segment spans residues 1 to 184; that stretch reads MNEKKELQQE…KIRGWWWHRG (184 aa). 2 stretches are compositionally biased toward polar residues: residues 16 to 25 and 33 to 53; these read FQTPKNQQLE and EISS…PISQ. Composition is skewed to low complexity over residues 54–65 and 138–156; these read NDNSNNENESLN and NSNT…TNNN. Residues 185–205 traverse the membrane as a helical segment; it reads ISTYIMLFYIALNIGVGVHMF. Topologically, residues 206 to 229 are extracellular; the sequence is YNMYHSDIFKFLGLSFCFSRTAAR. A Ferric oxidoreductase domain is found at 225–375; it reads RTAARLINLN…LFIPFYILLC (151 aa). A helical membrane pass occupies residues 230 to 250; it reads LINLNSAVILLPVLRNFLSWL. Over 251–269 the chain is Cytoplasmic; sequence RGTIVNNYIPIDKHLNFHK. 2 residues coordinate heme: H268 and H282. The chain crosses the membrane as a helical span at residues 270–290; that stretch reads LCAFMLFCCTIIHCVGHYISF. The Extracellular segment spans residues 291–324; that stretch reads KKINDDVLKIDDGKSVAGDYLNININNFPDEKYL. Residues 325–345 traverse the membrane as a helical segment; it reads FFKSVPGITGHIMLLILILIV. Residues 346 to 355 lie on the Cytoplasmic side of the membrane; sequence SSSMWRIRRP. The helical transmembrane segment at 356–376 threads the bilayer; sequence MFEIFWYVHHLFIPFYILLCF. 2 residues coordinate heme: H364 and H377. Residues 377-388 lie on the Extracellular side of the membrane; it reads HGYSKILKKDPQ. A helical transmembrane segment spans residues 389–409; it reads SWMWIIAPFILYSIERLIRIA. Residues 404–528 enclose the FAD-binding FR-type domain; sequence RLIRIARSKK…DGPFGAPAEN (125 aa). Residues 410–698 lie on the Cytoplasmic side of the membrane; the sequence is RSKKRVILEK…CHLIFHKENF (289 aa). Residue 460 to 466 coordinates FAD; the sequence is HPFTITS.

Composed of a heavy chain and a light chain. It depends on FAD as a cofactor.

Its subcellular location is the membrane. Functionally, critical component of the membrane-bound oxidase that generates superoxide. It is the terminal component of a respiratory chain that transfers single electrons from cytoplasmic NADPH across the plasma membrane to molecular oxygen on the exterior. This chain is Superoxide-generating NADPH oxidase heavy chain subunit B (noxB), found in Dictyostelium discoideum (Social amoeba).